We begin with the raw amino-acid sequence, 92 residues long: Small ribosomal subunit protein bS20 (92 aa).

The disordered stretch occupies residues Met-1–Ser-23. The segment covering Ala-7–His-20 has biased composition (basic residues).

Belongs to the bacterial ribosomal protein bS20 family.

Functionally, binds directly to 16S ribosomal RNA. This is Small ribosomal subunit protein bS20 from Pseudomonas savastanoi pv. phaseolicola (strain 1448A / Race 6) (Pseudomonas syringae pv. phaseolicola (strain 1448A / Race 6)).